The following is a 188-amino-acid chain: Apolipoprotein M (188 aa).

The segment at residues 1 to 22 (MFHQIWAALLYFYGIILNSIYQ) is a signal peptide (not cleaved). Cystine bridges form between C23–C167, C95–C183, and C128–C157. A glycan (N-linked (GlcNAc...) asparagine) is linked at N135. Tetradecanoate contacts are provided by E136 and R143.

Belongs to the calycin superfamily. Lipocalin family. Highly divergent. Interacts with LRP2; LRP2 mediates APOM renal uptake and subsequent lysosomal degradation. As to expression, plasma protein. Expressed in liver and kidney.

It is found in the secreted. Functionally, probably involved in lipid transport. Can bind sphingosine-1-phosphate, myristic acid, palmitic acid and stearic acid, retinol, all-trans-retinoic acid and 9-cis-retinoic acid. The chain is Apolipoprotein M (APOM) from Homo sapiens (Human).